A 336-amino-acid chain; its full sequence is G patch domain and ankyrin repeat-containing protein 1 homolog (336 aa).

2 ANK repeats span residues 123–152 and 156–185; these read FGWT…QVET and SGNT…LEET. In terms of domain architecture, G-patch spans 240–286; the sequence is AKNRGLQLMVKQGWDQEHGLGPSQSGRLYPVKTVLRKQRTGLGIEQQ.

The polypeptide is G patch domain and ankyrin repeat-containing protein 1 homolog (Drosophila melanogaster (Fruit fly)).